Here is a 561-residue protein sequence, read N- to C-terminus: DNA ligase B (561 aa).

Catalysis depends on Lys-125, which acts as the N6-AMP-lysine intermediate.

This sequence belongs to the NAD-dependent DNA ligase family. LigB subfamily.

The enzyme catalyses NAD(+) + (deoxyribonucleotide)n-3'-hydroxyl + 5'-phospho-(deoxyribonucleotide)m = (deoxyribonucleotide)n+m + AMP + beta-nicotinamide D-nucleotide.. Functionally, catalyzes the formation of phosphodiester linkages between 5'-phosphoryl and 3'-hydroxyl groups in double-stranded DNA using NAD as a coenzyme and as the energy source for the reaction. The polypeptide is DNA ligase B (Salmonella gallinarum (strain 287/91 / NCTC 13346)).